The following is a 59-amino-acid chain: Large ribosomal subunit protein bL32c (59 aa).

Positions 37–59 (SRSFSSGNEHPKPKGFSGQQTNK) are disordered.

Belongs to the bacterial ribosomal protein bL32 family.

The protein localises to the plastid. It is found in the chloroplast. The polypeptide is Large ribosomal subunit protein bL32c (Hordeum vulgare (Barley)).